The primary structure comprises 382 residues: Alanine racemase (382 aa).

K39 (proton acceptor; specific for D-alanine) is an active-site residue. At K39 the chain carries N6-(pyridoxal phosphate)lysine. R138 contacts substrate. Y265 (proton acceptor; specific for L-alanine) is an active-site residue. M312 serves as a coordination point for substrate.

Belongs to the alanine racemase family. It depends on pyridoxal 5'-phosphate as a cofactor.

It carries out the reaction L-alanine = D-alanine. It functions in the pathway amino-acid biosynthesis; D-alanine biosynthesis; D-alanine from L-alanine: step 1/1. In terms of biological role, catalyzes the interconversion of L-alanine and D-alanine. May also act on other amino acids. The sequence is that of Alanine racemase (alr) from Staphylococcus saprophyticus subsp. saprophyticus (strain ATCC 15305 / DSM 20229 / NCIMB 8711 / NCTC 7292 / S-41).